The chain runs to 263 residues: tRNA (guanine-N(7)-)-methyltransferase (263 aa).

Positions 1-33 are disordered; sequence MSDHGRMHSTGSEVAAPVAPDPDTEGVHPHFNR. S-adenosyl-L-methionine-binding residues include Glu89, Glu114, Asp146, and Asp169. Residue Asp169 is part of the active site. Substrate contacts are provided by residues Lys173, Asp205, and 242 to 245; that span reads TKYE.

It belongs to the class I-like SAM-binding methyltransferase superfamily. TrmB family.

The catalysed reaction is guanosine(46) in tRNA + S-adenosyl-L-methionine = N(7)-methylguanosine(46) in tRNA + S-adenosyl-L-homocysteine. The protein operates within tRNA modification; N(7)-methylguanine-tRNA biosynthesis. Its function is as follows. Catalyzes the formation of N(7)-methylguanine at position 46 (m7G46) in tRNA. The protein is tRNA (guanine-N(7)-)-methyltransferase of Mycolicibacterium gilvum (strain PYR-GCK) (Mycobacterium gilvum (strain PYR-GCK)).